Consider the following 223-residue polypeptide: Glucosyl-3-phosphoglycerate phosphatase (223 aa).

Substrate is bound at residue Arg10. His11 (tele-phosphohistidine intermediate) is an active-site residue. Residue Lys47 forms an Isoglutamyl lysine isopeptide (Lys-Gln) (interchain with Q-Cter in protein Pup) linkage. Position 60 (Arg60) interacts with substrate. Glu84 functions as the Proton donor/acceptor in the catalytic mechanism. His159 is a binding site for substrate.

It belongs to the phosphoglycerate mutase family. As to quaternary structure, homodimer. Dimerization of the enzyme is essential for its dephosphorylation activity.

The catalysed reaction is (2R)-2-O-(alpha-D-glucopyranosyl)-3-phospho-glycerate + H2O = (2R)-2-O-(alpha-D-glucopyranosyl)-glycerate + phosphate. It carries out the reaction 2-O-(alpha-D-mannosyl)-3-phosphoglycerate + H2O = (2R)-2-O-(alpha-D-mannosyl)-glycerate + phosphate. It catalyses the reaction (2R)-2-O-[alpha-D-mannopyranosyl-(1-&gt;2)-alpha-D-glucopyranosyl]-3-phospho-glycerate + H2O = (2R)-2-O-[alpha-D-mannopyranosyl-(1-&gt;2)-alpha-D-glucopyranosyl]-glycerate + phosphate. Progressively inhibited by cobalt ions at concentrations between 10-50 mM and by copper ions at any concentration between 1-50 mM. Functionally, involved in the biosynthesis of mycobacterial methylglucose lipopolysaccharides (MGLPs). Catalyzes the dephosphorylation of glucosyl-3-phosphoglycerate (GPG) to glucosylglycerate (GG). GPG is the preferred substrate, but GpgP also exhibits low dephosphorylation activity on mannosyl-3-phosphoglycerate (MPG) and mannosylglucosyl-3-phosphoglycerate (MGPG) in vitro. Shows only trace of phosphoglycerate mutase (PGM) activity. The polypeptide is Glucosyl-3-phosphoglycerate phosphatase (Mycobacterium tuberculosis (strain ATCC 25618 / H37Rv)).